The sequence spans 264 residues: Thymidylate synthase 2 (264 aa).

Residue R21 coordinates dUMP. H51 is a (6R)-5,10-methylene-5,6,7,8-tetrahydrofolate binding site. 126–127 (RR) is a dUMP binding site. C146 functions as the Nucleophile in the catalytic mechanism. Residues 166–169 (RSAD), N177, and 207–209 (HIY) each bind dUMP. Residue D169 coordinates (6R)-5,10-methylene-5,6,7,8-tetrahydrofolate. S263 provides a ligand contact to (6R)-5,10-methylene-5,6,7,8-tetrahydrofolate.

It belongs to the thymidylate synthase family. Bacterial-type ThyA subfamily. Homodimer.

The protein localises to the cytoplasm. It catalyses the reaction dUMP + (6R)-5,10-methylene-5,6,7,8-tetrahydrofolate = 7,8-dihydrofolate + dTMP. The protein operates within pyrimidine metabolism; dTTP biosynthesis. Functionally, catalyzes the reductive methylation of 2'-deoxyuridine-5'-monophosphate (dUMP) to 2'-deoxythymidine-5'-monophosphate (dTMP) while utilizing 5,10-methylenetetrahydrofolate (mTHF) as the methyl donor and reductant in the reaction, yielding dihydrofolate (DHF) as a by-product. This enzymatic reaction provides an intracellular de novo source of dTMP, an essential precursor for DNA biosynthesis. The polypeptide is Thymidylate synthase 2 (Bacillus spizizenii (strain ATCC 23059 / NRRL B-14472 / W23) (Bacillus subtilis subsp. spizizenii)).